Here is an 814-residue protein sequence, read N- to C-terminus: Leucine--tRNA ligase (814 aa).

A 'HIGH' region motif is present at residues 42 to 52 (PYPSGNLHIGH). The short motif at 582 to 586 (KMSKS) is the 'KMSKS' region element. Residue K585 participates in ATP binding.

Belongs to the class-I aminoacyl-tRNA synthetase family.

The protein localises to the cytoplasm. It catalyses the reaction tRNA(Leu) + L-leucine + ATP = L-leucyl-tRNA(Leu) + AMP + diphosphate. The polypeptide is Leucine--tRNA ligase (Herpetosiphon aurantiacus (strain ATCC 23779 / DSM 785 / 114-95)).